Here is a 155-residue protein sequence, read N- to C-terminus: E3 ubiquitin-protein ligase RHA2A (155 aa).

An RING-type; atypical zinc finger spans residues 86–128; that stretch reads CVVCLSKLKEGEEVRKLECRHVFHKKCLEGWLHQFNFTCPLCR.

As to quaternary structure, interacts with NAC019 and NAC055. Expressed in stems, flowers, cauline leaves, rosettes, siliques, seeds and roots.

It localises to the cytoplasm. The protein localises to the nucleus. It carries out the reaction S-ubiquitinyl-[E2 ubiquitin-conjugating enzyme]-L-cysteine + [acceptor protein]-L-lysine = [E2 ubiquitin-conjugating enzyme]-L-cysteine + N(6)-ubiquitinyl-[acceptor protein]-L-lysine.. It functions in the pathway protein modification; protein ubiquitination. In terms of biological role, E3 ubiquitin-protein ligase involved in the positive regulation of abscisic acid (ABA) signaling and responses to salt and osmotic stresses during seed germination and early seedling development. Acts additively with RHA2B in regulating ABA signaling and drought response. Possesses E3 ubiquitin ligase activity in vitro. The polypeptide is E3 ubiquitin-protein ligase RHA2A (Arabidopsis thaliana (Mouse-ear cress)).